The chain runs to 217 residues: GrpE protein homolog 1, mitochondrial (217 aa).

The N-terminal 27 residues, 1-27, are a transit peptide targeting the mitochondrion; the sequence is MAARCVRLARRSLPALALSFRPSPRLL. Positions 37 to 56 are disordered; that stretch reads GQNLDEDLGHCEPKTDPPSA. The residue at position 94 (lysine 94) is an N6-acetyllysine; alternate. Position 94 is an N6-succinyllysine; alternate (lysine 94). Lysine 100 is modified (N6-acetyllysine). An N6-succinyllysine modification is found at lysine 120. An N6-acetyllysine; alternate modification is found at lysine 215. Lysine 215 is modified (N6-succinyllysine; alternate).

Belongs to the GrpE family. As to quaternary structure, probable component of the PAM complex at least composed of a mitochondrial HSP70 protein, GRPEL1 or GRPEL2, TIMM44, TIMM16/PAM16 and TIMM14/DNAJC19. Binds to HSP70, HSC70 and HSJ1B.

Its subcellular location is the mitochondrion matrix. Its function is as follows. Essential component of the PAM complex, a complex required for the translocation of transit peptide-containing proteins from the inner membrane into the mitochondrial matrix in an ATP-dependent manner. Seems to control the nucleotide-dependent binding of mitochondrial HSP70 to substrate proteins. This Mus musculus (Mouse) protein is GrpE protein homolog 1, mitochondrial (Grpel1).